The chain runs to 827 residues: Glycerol-3-phosphate acyltransferase (827 aa).

The HXXXXD motif signature appears at 325–330 (CHRSHM).

The protein belongs to the GPAT/DAPAT family.

The protein localises to the cell inner membrane. The catalysed reaction is sn-glycerol 3-phosphate + an acyl-CoA = a 1-acyl-sn-glycero-3-phosphate + CoA. Its pathway is phospholipid metabolism; CDP-diacylglycerol biosynthesis; CDP-diacylglycerol from sn-glycerol 3-phosphate: step 1/3. The polypeptide is Glycerol-3-phosphate acyltransferase (Escherichia coli (strain SMS-3-5 / SECEC)).